The primary structure comprises 101 residues: Replication restart protein PriB (101 aa).

An SSB domain is found at 1-101; the sequence is MATNHLVLSG…LHAENVELKT (101 aa).

The protein belongs to the PriB family. In terms of assembly, homodimer. Interacts with PriA and DnaT. Component of the replication restart primosome. Primosome assembly occurs via a 'hand-off' mechanism. PriA binds to replication forks, subsequently PriB then DnaT bind; DnaT then displaces ssDNA to generate the helicase loading substrate.

Functionally, involved in the restart of stalled replication forks, which reloads the replicative helicase on sites other than the origin of replication; the PriA-PriB pathway is the major replication restart pathway. During primosome assembly it facilitates complex formation between PriA and DnaT on DNA; stabilizes PriA on DNA. Stimulates the DNA unwinding activity of PriA helicase. In Shewanella sediminis (strain HAW-EB3), this protein is Replication restart protein PriB.